Here is a 947-residue protein sequence, read N- to C-terminus: Bifunctional glutamine synthetase adenylyltransferase/adenylyl-removing enzyme (947 aa).

An adenylyl removase region spans residues 1 to 440; sequence MTPLSSPLSQ…VFNELIGDDE (440 aa). The adenylyl transferase stretch occupies residues 450–947; the sequence is SEPWREVWQD…ASWRKWLVAV (498 aa).

This sequence belongs to the GlnE family. The cofactor is Mg(2+).

The enzyme catalyses [glutamine synthetase]-O(4)-(5'-adenylyl)-L-tyrosine + phosphate = [glutamine synthetase]-L-tyrosine + ADP. It catalyses the reaction [glutamine synthetase]-L-tyrosine + ATP = [glutamine synthetase]-O(4)-(5'-adenylyl)-L-tyrosine + diphosphate. In terms of biological role, involved in the regulation of glutamine synthetase GlnA, a key enzyme in the process to assimilate ammonia. When cellular nitrogen levels are high, the C-terminal adenylyl transferase (AT) inactivates GlnA by covalent transfer of an adenylyl group from ATP to specific tyrosine residue of GlnA, thus reducing its activity. Conversely, when nitrogen levels are low, the N-terminal adenylyl removase (AR) activates GlnA by removing the adenylyl group by phosphorolysis, increasing its activity. The regulatory region of GlnE binds the signal transduction protein PII (GlnB) which indicates the nitrogen status of the cell. In Salmonella heidelberg (strain SL476), this protein is Bifunctional glutamine synthetase adenylyltransferase/adenylyl-removing enzyme.